Reading from the N-terminus, the 108-residue chain is uncharacterized protein (108 aa).

An N-terminal signal peptide occupies residues 1 to 16 (MKKLILIAIMASGLVA). The N-palmitoyl cysteine moiety is linked to residue C17. A lipid anchor (S-diacylglycerol cysteine) is attached at C17.

The protein resides in the cell membrane. This is an uncharacterized protein from Escherichia coli (strain K12).